Consider the following 243-residue polypeptide: MKRIIEICANSAQSCVEAEAGGATRVELCAGIPEGGTTPSYGEIKTAKALTSKIDINVIIRPRGGDFLYTEAEVQSMLLDIELCKELKVHGVVFGCLTKDGDIDVPLMRRLIEAAKPLSVTCHRAFDVCRDPFTALEQLIELGCDRILTSGQQSDAVKGIPLIAELVKRADGRIIIMPGCGVRENNIGKIEAETGAKEFHTSARSIVYSKMEYRNENVPMGSSIVSSEFETVQTDREKVKAYI.

The protein belongs to the CutC family.

The protein localises to the cytoplasm. This Parabacteroides distasonis (strain ATCC 8503 / DSM 20701 / CIP 104284 / JCM 5825 / NCTC 11152) protein is PF03932 family protein CutC.